The chain runs to 379 residues: Mannitol-1-phosphate 5-dehydrogenase (379 aa).

Residue 3–14 (ALHFGAGNIGRG) participates in NAD(+) binding.

This sequence belongs to the mannitol dehydrogenase family.

The enzyme catalyses D-mannitol 1-phosphate + NAD(+) = beta-D-fructose 6-phosphate + NADH + H(+). The polypeptide is Mannitol-1-phosphate 5-dehydrogenase (Actinobacillus pleuropneumoniae serotype 3 (strain JL03)).